Consider the following 58-residue polypeptide: Succinate dehydrogenase subunit 8A, mitochondrial (58 aa).

In terms of assembly, component of complex II composed of eight subunits in plants: four classical SDH subunits SDH1, SDH2, SDH3 and SDH4 (a flavoprotein (FP), an iron-sulfur protein (IP), and a cytochrome b composed of a large and a small subunit.), as well as four subunits unknown in mitochondria from bacteria and heterotrophic eukaryotes.

It is found in the mitochondrion inner membrane. It participates in carbohydrate metabolism; tricarboxylic acid cycle. This chain is Succinate dehydrogenase subunit 8A, mitochondrial, found in Oryza sativa subsp. japonica (Rice).